Reading from the N-terminus, the 511-residue chain is Apolipoprotein N-acyltransferase (511 aa).

6 helical membrane-spanning segments follow: residues 7 to 25, 58 to 78, 90 to 110, 125 to 145, 163 to 183, and 192 to 212; these read PGWP…TPLA, GWWY…VSIH, FLML…AWLW, LAFA…LTGF, VPVG…ALLV, and GASL…GLYL. A CN hydrolase domain is found at 230–470; the sequence is IQGNIAQELK…QGILRGEVIP (241 aa). Glu269 (proton acceptor) is an active-site residue. Lys330 is an active-site residue. Residue Cys382 is the Nucleophile of the active site. Residues 478-498 form a helical membrane-spanning segment; sequence LQYRVWPLAGLAGVLLLWALL.

This sequence belongs to the CN hydrolase family. Apolipoprotein N-acyltransferase subfamily.

Its subcellular location is the cell inner membrane. The catalysed reaction is N-terminal S-1,2-diacyl-sn-glyceryl-L-cysteinyl-[lipoprotein] + a glycerophospholipid = N-acyl-S-1,2-diacyl-sn-glyceryl-L-cysteinyl-[lipoprotein] + a 2-acyl-sn-glycero-3-phospholipid + H(+). It functions in the pathway protein modification; lipoprotein biosynthesis (N-acyl transfer). Functionally, catalyzes the phospholipid dependent N-acylation of the N-terminal cysteine of apolipoprotein, the last step in lipoprotein maturation. This is Apolipoprotein N-acyltransferase from Pseudomonas paraeruginosa (strain DSM 24068 / PA7) (Pseudomonas aeruginosa (strain PA7)).